The sequence spans 302 residues: Protein TILLER ANGLE CONTROL 1 (302 aa).

Residues 57-63 (GILTIGT) carry the IGT motif motif. Disordered regions lie at residues 82–115 (ESEE…VEDE) and 159–180 (EGSS…KNKK). Positions 99-115 (DDDDDDDEHYDHSVEDE) are enriched in acidic residues. A compositionally biased stretch (polar residues) spans 162–175 (SEISTKPDQSANDQ).

It belongs to the TAC family. As to expression, highly expressed in flower buds. Expressed in branch attachment sites, vegetative buds and young fruits.

Involved in the regulation of axillary shoot growth angle. Promotes horizontal shoot growth. The chain is Protein TILLER ANGLE CONTROL 1 from Prunus persica (Peach).